The sequence spans 37 residues: uncharacterized protein (37 aa).

Residues methionine 1–alanine 21 traverse the membrane as a helical segment.

It localises to the endoplasmic reticulum membrane. This is an uncharacterized protein from Saccharomyces cerevisiae (strain ATCC 204508 / S288c) (Baker's yeast).